We begin with the raw amino-acid sequence, 75 residues long: Small ribosomal subunit protein bS18 (75 aa).

The protein belongs to the bacterial ribosomal protein bS18 family. In terms of assembly, part of the 30S ribosomal subunit. Forms a tight heterodimer with protein bS6.

In terms of biological role, binds as a heterodimer with protein bS6 to the central domain of the 16S rRNA, where it helps stabilize the platform of the 30S subunit. The polypeptide is Small ribosomal subunit protein bS18 (Histophilus somni (strain 129Pt) (Haemophilus somnus)).